Here is a 381-residue protein sequence, read N- to C-terminus: tRNA pseudouridine synthase D (381 aa).

Asp81 functions as the Nucleophile in the catalytic mechanism. The TRUD domain maps to 160 to 335 (GMPNYFGSQR…TLGSRRFFWV (176 aa)).

This sequence belongs to the pseudouridine synthase TruD family.

It carries out the reaction uridine(13) in tRNA = pseudouridine(13) in tRNA. Its function is as follows. Responsible for synthesis of pseudouridine from uracil-13 in transfer RNAs. The sequence is that of tRNA pseudouridine synthase D from Helicobacter pylori (strain HPAG1).